The primary structure comprises 252 residues: tRNA pseudouridine synthase A (252 aa).

The Nucleophile role is filled by aspartate 54. Tyrosine 113 contacts substrate.

It belongs to the tRNA pseudouridine synthase TruA family. Homodimer.

It catalyses the reaction uridine(38/39/40) in tRNA = pseudouridine(38/39/40) in tRNA. Formation of pseudouridine at positions 38, 39 and 40 in the anticodon stem and loop of transfer RNAs. The chain is tRNA pseudouridine synthase A from Bacteroides fragilis (strain ATCC 25285 / DSM 2151 / CCUG 4856 / JCM 11019 / LMG 10263 / NCTC 9343 / Onslow / VPI 2553 / EN-2).